A 160-amino-acid polypeptide reads, in one-letter code: Probable transcriptional regulator YgiV (160 aa).

Functionally, represses expression of mcbR. This is Probable transcriptional regulator YgiV (ygiV) from Escherichia coli O157:H7.